Consider the following 341-residue polypeptide: HMG box-containing protein C10F6.08c (341 aa).

The segment covering 68–77 has biased composition (basic and acidic residues); that stretch reads SEAKSREFGQ. Disordered stretches follow at residues 68-195 and 236-341; these read SEAK…SNAK and LTEE…SSNA. 2 stretches are compositionally biased toward polar residues: residues 116-157 and 165-177; these read DTNV…QVVQ and NTDP…ITNL. Low complexity predominate over residues 178–195; the sequence is KTESSKSSGAKKATSNAK. A DNA-binding region (HMG box) is located at residues 195–263; it reads KITDTMLFNH…KAREARRRRS (69 aa). 2 stretches are compositionally biased toward basic and acidic residues: residues 238-256 and 269-304; these read EEEK…EKAR and KLEK…GQKE. Residues T314 and T315 each carry the phosphothreonine modification. Residue S316 is modified to Phosphoserine.

The protein localises to the nucleus. In Schizosaccharomyces pombe (strain 972 / ATCC 24843) (Fission yeast), this protein is HMG box-containing protein C10F6.08c.